Consider the following 332-residue polypeptide: Glycerol-3-phosphate dehydrogenase [NAD(P)+] (332 aa).

The NADPH site is built by W11, R30, and K108. 3 residues coordinate sn-glycerol 3-phosphate: K108, G137, and S139. A141 contacts NADPH. Sn-glycerol 3-phosphate-binding residues include K192, D245, S255, R256, and N257. K192 serves as the catalytic Proton acceptor. R256 lines the NADPH pocket. Residues V280 and E282 each contribute to the NADPH site.

This sequence belongs to the NAD-dependent glycerol-3-phosphate dehydrogenase family.

Its subcellular location is the cytoplasm. The enzyme catalyses sn-glycerol 3-phosphate + NAD(+) = dihydroxyacetone phosphate + NADH + H(+). The catalysed reaction is sn-glycerol 3-phosphate + NADP(+) = dihydroxyacetone phosphate + NADPH + H(+). Its pathway is membrane lipid metabolism; glycerophospholipid metabolism. In terms of biological role, catalyzes the reduction of the glycolytic intermediate dihydroxyacetone phosphate (DHAP) to sn-glycerol 3-phosphate (G3P), the key precursor for phospholipid synthesis. This chain is Glycerol-3-phosphate dehydrogenase [NAD(P)+], found in Paraburkholderia phymatum (strain DSM 17167 / CIP 108236 / LMG 21445 / STM815) (Burkholderia phymatum).